Consider the following 251-residue polypeptide: Ditrans,polycis-undecaprenyl-diphosphate synthase ((2E,6E)-farnesyl-diphosphate specific) (251 aa).

Asp-21 is a catalytic residue. Asp-21 contacts Mg(2+). Substrate contacts are provided by residues 22 to 25 (GNNR), Trp-26, His-38, and 66 to 68 (SSE). Asn-69 functions as the Proton acceptor in the catalytic mechanism. Residues Trp-70, Arg-72, Arg-189, and 195–197 (RIS) each bind substrate. Glu-208 lines the Mg(2+) pocket.

It belongs to the UPP synthase family. As to quaternary structure, homodimer. The cofactor is Mg(2+).

It catalyses the reaction 8 isopentenyl diphosphate + (2E,6E)-farnesyl diphosphate = di-trans,octa-cis-undecaprenyl diphosphate + 8 diphosphate. In terms of biological role, catalyzes the sequential condensation of isopentenyl diphosphate (IPP) with (2E,6E)-farnesyl diphosphate (E,E-FPP) to yield (2Z,6Z,10Z,14Z,18Z,22Z,26Z,30Z,34E,38E)-undecaprenyl diphosphate (di-trans,octa-cis-UPP). UPP is the precursor of glycosyl carrier lipid in the biosynthesis of bacterial cell wall polysaccharide components such as peptidoglycan and lipopolysaccharide. The sequence is that of Ditrans,polycis-undecaprenyl-diphosphate synthase ((2E,6E)-farnesyl-diphosphate specific) from Pseudomonas syringae pv. tomato (strain ATCC BAA-871 / DC3000).